The primary structure comprises 291 residues: Acetyl-coenzyme A carboxylase carboxyl transferase subunit beta (291 aa).

A CoA carboxyltransferase N-terminal domain is found at methionine 34–glutamate 291. Cysteine 38, cysteine 41, cysteine 57, and cysteine 60 together coordinate Zn(2+). Residues cysteine 38–cysteine 60 form a C4-type zinc finger.

The protein belongs to the AccD/PCCB family. In terms of assembly, acetyl-CoA carboxylase is a heterohexamer composed of biotin carboxyl carrier protein (AccB), biotin carboxylase (AccC) and two subunits each of ACCase subunit alpha (AccA) and ACCase subunit beta (AccD). Zn(2+) is required as a cofactor.

Its subcellular location is the cytoplasm. It carries out the reaction N(6)-carboxybiotinyl-L-lysyl-[protein] + acetyl-CoA = N(6)-biotinyl-L-lysyl-[protein] + malonyl-CoA. The protein operates within lipid metabolism; malonyl-CoA biosynthesis; malonyl-CoA from acetyl-CoA: step 1/1. Its function is as follows. Component of the acetyl coenzyme A carboxylase (ACC) complex. Biotin carboxylase (BC) catalyzes the carboxylation of biotin on its carrier protein (BCCP) and then the CO(2) group is transferred by the transcarboxylase to acetyl-CoA to form malonyl-CoA. This is Acetyl-coenzyme A carboxylase carboxyl transferase subunit beta from Clostridium botulinum (strain Alaska E43 / Type E3).